Consider the following 251-residue polypeptide: Flap endonuclease Xni (251 aa).

Asp104 contacts Mg(2+). Residues 160-248 (VSPQQLSDYW…ALTGNLQQLR (89 aa)) form the 5'-3' exonuclease domain. Positions 171, 172, 180, 182, and 185 each coordinate K(+). An interaction with DNA region spans residues 184-189 (GIGPKT).

The protein belongs to the Xni family. Mg(2+) serves as cofactor. K(+) is required as a cofactor.

Has flap endonuclease activity. During DNA replication, flap endonucleases cleave the 5'-overhanging flap structure that is generated by displacement synthesis when DNA polymerase encounters the 5'-end of a downstream Okazaki fragment. The sequence is that of Flap endonuclease Xni from Serratia proteamaculans (strain 568).